Here is a 918-residue protein sequence, read N- to C-terminus: von Willebrand factor A domain-containing protein DDB_G0292016 (918 aa).

The VIT domain maps to 44–172; sequence KRCGLYSLKN…NVKVRVVISS (129 aa). A VWFA domain is found at 299–467; sequence EFIFLIDCSG…NMEKQVMKLL (169 aa). The tract at residues 625–814 is disordered; the sequence is VDIMNQSPPI…PSAPSQQKSV (190 aa). The span at 650–690 shows a compositional bias: low complexity; that stretch reads ASGALSSSILSRKRSSSPSTATKRSSSSSFSSSYLSLSSSS. Positions 716-746 are enriched in acidic residues; that stretch reads YESDGGDQSSEQDEEEEDDCDDFHEDLDEDL. Basic and acidic residues predominate over residues 752–774; the sequence is DVDKKECEKECKKKDSSKVDLKV. Over residues 777–814 the composition is skewed to low complexity; that stretch reads SKVPLPSRSPSVSKPTTTSLLSPSPKSAPSAPSQQKSV.

In Dictyostelium discoideum (Social amoeba), this protein is von Willebrand factor A domain-containing protein DDB_G0292016.